The sequence spans 473 residues: Serine palmitoyltransferase 1 (473 aa).

Over 1–15 (MATVAEQWVLVEMVQ) the chain is Lumenal. Residues 1–66 (MATVAEQWVL…KEELIEEWQP (66 aa)) form an interaction with SPTLC2 region. Residues 16 to 36 (ALYEAPAYHLILEGILILWII) form a helical membrane-spanning segment. Topologically, residues 37–473 (RLVFSKTYKL…IREAAQAVLL (437 aa)) are cytoplasmic. A Phosphotyrosine; by ABL modification is found at tyrosine 164.

It belongs to the class-II pyridoxal-phosphate-dependent aminotransferase family. In terms of assembly, component of the serine palmitoyltransferase (SPT) complex, which is also composed of SPTLC2 or SPTLC3 and SPTSSA or SPTSSB. The heterodimer with SPTLC2 or SPTLC3 forms the catalytic core of the enzyme, while SPTSSA or SPTSSB subunits determine substrate specificity. SPT also interacts with ORMDL proteins, especially ORMDL3, which negatively regulate SPT activity in the presence of ceramides. Forms dimers of heterodimers with SPTLC2. Interacts with RTN4 (isoform B). Pyridoxal 5'-phosphate serves as cofactor. In terms of processing, phosphorylation at Tyr-164 inhibits activity and promotes cell survival. As to expression, expressed in a variety of tissues. Highest expression in brain, kidney and liver. Expressed in brown and white adipose tissues.

Its subcellular location is the endoplasmic reticulum membrane. It carries out the reaction L-serine + hexadecanoyl-CoA + H(+) = 3-oxosphinganine + CO2 + CoA. It catalyses the reaction octadecanoyl-CoA + L-serine + H(+) = 3-oxoeicosasphinganine + CO2 + CoA. The catalysed reaction is tetradecanoyl-CoA + L-serine + H(+) = 3-oxohexadecasphinganine + CO2 + CoA. The enzyme catalyses dodecanoyl-CoA + L-serine + H(+) = 3-oxotetradecasphinganine + CO2 + CoA. Its pathway is lipid metabolism; sphingolipid metabolism. Its activity is regulated as follows. SPT complex catalytic activity is negatively regulated by ORMDL proteins, including ORMDL3, in the presence of ceramides. This mechanism allows to maintain ceramide levels at sufficient concentrations for the production of complex sphingolipids, but which prevents the accumulation of ceramides to levels that trigger apoptosis. Component of the serine palmitoyltransferase multisubunit enzyme (SPT) that catalyzes the initial and rate-limiting step in sphingolipid biosynthesis by condensing L-serine and activated acyl-CoA (most commonly palmitoyl-CoA) to form long-chain bases. The SPT complex is also composed of SPTLC2 or SPTLC3 and SPTSSA or SPTSSB. Within this complex, the heterodimer with SPTLC2 or SPTLC3 forms the catalytic core. The composition of the serine palmitoyltransferase (SPT) complex determines the substrate preference. The SPTLC1-SPTLC2-SPTSSA complex shows a strong preference for C16-CoA substrate, while the SPTLC1-SPTLC3-SPTSSA isozyme uses both C14-CoA and C16-CoA as substrates, with a slight preference for C14-CoA. The SPTLC1-SPTLC2-SPTSSB complex shows a strong preference for C18-CoA substrate, while the SPTLC1-SPTLC3-SPTSSB isozyme displays an ability to use a broader range of acyl-CoAs, without apparent preference. Required for adipocyte cell viability and metabolic homeostasis. The sequence is that of Serine palmitoyltransferase 1 (Sptlc1) from Mus musculus (Mouse).